We begin with the raw amino-acid sequence, 285 residues long: Complex I assembly factor TIMMDC1, mitochondrial (285 aa).

The next 4 helical transmembrane spans lie at 80-100, 137-159, 165-185, and 188-208; these read AALS…FIYA, RWSW…LTVY, LSHF…NLGL, and LVAG…LLMA.

Belongs to the Tim17/Tim22/Tim23 family. Associates with the intermediate 315 kDa subcomplex of incompletely assembled complex I. Interacts with TMEM70.

It is found in the mitochondrion membrane. In terms of biological role, chaperone protein involved in the assembly of the mitochondrial NADH:ubiquinone oxidoreductase complex (complex I). Participates in constructing the membrane arm of complex I. In Rattus norvegicus (Rat), this protein is Complex I assembly factor TIMMDC1, mitochondrial.